Here is a 153-residue protein sequence, read N- to C-terminus: Superoxide dismutase [Cu-Zn] (153 aa).

Cu cation contacts are provided by His-45, His-47, and His-62. A disulfide bridge links Cys-56 with Cys-145. Residues His-62, His-70, His-79, and Asp-82 each contribute to the Zn(2+) site. His-119 is a binding site for Cu cation.

It belongs to the Cu-Zn superoxide dismutase family. Homodimer. Cu cation is required as a cofactor. It depends on Zn(2+) as a cofactor.

It localises to the cytoplasm. The enzyme catalyses 2 superoxide + 2 H(+) = H2O2 + O2. In terms of biological role, destroys radicals which are normally produced within the cells and which are toxic to biological systems. The protein is Superoxide dismutase [Cu-Zn] (SOD) of Schistosoma mansoni (Blood fluke).